The following is a 265-amino-acid chain: MIRARKRFGQHWLRSEAILAQIIAAAELHPGDRVLEIGPGRGALTRPLLVSGAEVVAVELDRDLCGQLRRQFDSERFQLIEGDILRLDLAPLGCNKVVANIPYNITGPLLGHLLGSIARPRRPAFERLILLVQKEIGDRLMASPGSKAYGALSVRVQFLATCEKVCAVPPRAFQPPPKVDSVVVCLRPHRTLPRVGSPQWLETLLKQGFATRRKMLANALKSLVEPEQVRQALLQLGRDANSRAEALSLEDWLALSEVLRQLQQN.

6 residues coordinate S-adenosyl-L-methionine: His-11, Leu-13, Gly-38, Glu-59, Asp-83, and Asn-100.

The protein belongs to the class I-like SAM-binding methyltransferase superfamily. rRNA adenine N(6)-methyltransferase family. RsmA subfamily.

Its subcellular location is the cytoplasm. It carries out the reaction adenosine(1518)/adenosine(1519) in 16S rRNA + 4 S-adenosyl-L-methionine = N(6)-dimethyladenosine(1518)/N(6)-dimethyladenosine(1519) in 16S rRNA + 4 S-adenosyl-L-homocysteine + 4 H(+). Specifically dimethylates two adjacent adenosines (A1518 and A1519) in the loop of a conserved hairpin near the 3'-end of 16S rRNA in the 30S particle. May play a critical role in biogenesis of 30S subunits. This is Ribosomal RNA small subunit methyltransferase A from Thermosynechococcus vestitus (strain NIES-2133 / IAM M-273 / BP-1).